The chain runs to 87 residues: Polyketide-8 synthase acyl carrier protein 2 (87 aa).

The Carrier domain occupies 8–83 (ALDKEQLREL…GTYELLTSKL (76 aa)). Ser43 carries the O-(pantetheine 4'-phosphoryl)serine modification.

In terms of processing, 4'-phosphopantetheine is transferred from CoA to a specific serine of the apo-ACP-like protein.

Its function is as follows. Acyl carrier protein. The sequence is that of Polyketide-8 synthase acyl carrier protein 2 from Streptomyces avermitilis (strain ATCC 31267 / DSM 46492 / JCM 5070 / NBRC 14893 / NCIMB 12804 / NRRL 8165 / MA-4680).